The chain runs to 329 residues: Protein mlo2 (329 aa).

The UBR-type zinc finger occupies 33-104 (DTCTYSMGYL…HSIPCNLRKS (72 aa)). The PHD-type zinc finger occupies 120 to 179 (GRFCICDTVYNPETEEGTMFQCILCEDWFHEKCLQKTNKGIAIPDAETFEWLVCSECSEK).

The protein belongs to the UBR7 family.

In terms of biological role, not known, interfere with mitotic chromosome segregation when overexpressed. This chain is Protein mlo2 (mlo2), found in Schizosaccharomyces pombe (strain 972 / ATCC 24843) (Fission yeast).